Reading from the N-terminus, the 362-residue chain is Methylthioribose-1-phosphate isomerase (362 aa).

Residues 53–55 (RGA), Arg-90, and Gln-201 each bind substrate. The active-site Proton donor is the Asp-242. 252–253 (NK) provides a ligand contact to substrate.

The protein belongs to the eIF-2B alpha/beta/delta subunits family. MtnA subfamily.

It carries out the reaction 5-(methylsulfanyl)-alpha-D-ribose 1-phosphate = 5-(methylsulfanyl)-D-ribulose 1-phosphate. It functions in the pathway amino-acid biosynthesis; L-methionine biosynthesis via salvage pathway; L-methionine from S-methyl-5-thio-alpha-D-ribose 1-phosphate: step 1/6. In terms of biological role, catalyzes the interconversion of methylthioribose-1-phosphate (MTR-1-P) into methylthioribulose-1-phosphate (MTRu-1-P). The sequence is that of Methylthioribose-1-phosphate isomerase from Paramagnetospirillum magneticum (strain ATCC 700264 / AMB-1) (Magnetospirillum magneticum).